The primary structure comprises 741 residues: Protein O-mannosyl-transferase TMTC4 (741 aa).

The Cytoplasmic segment spans residues 1 to 14 (MAVLDTDLDHILPS). The chain crosses the membrane as a helical span at residues 15 to 35 (SVLPPFWAKLVVGSVAIVCFA). The Extracellular segment spans residues 36-111 (RSYDGDFVFD…FHPVGFHVVN (76 aa)). N78 carries N-linked (GlcNAc...) asparagine glycosylation. The chain crosses the membrane as a helical span at residues 112–132 (ILLHSGISVLMVDVFSVLFGG). Residues 133 to 141 (LQYTSKGRR) lie on the Cytoplasmic side of the membrane. Residues 142-162 (LHLAPRASLLAALLFAVHPVH) form a helical membrane-spanning segment. At 163 to 165 (TEC) the chain is on the extracellular side. Residues 166 to 186 (VAGVVGRADLLCALFFLLSFL) form a helical membrane-spanning segment. Topologically, residues 187–198 (GYCKAFRESNKE) are cytoplasmic. A helical membrane pass occupies residues 199–219 (GAHSSTFWVLLSIFLGAVAML). The Extracellular segment spans residues 220–224 (CKEQG). A helical membrane pass occupies residues 225-245 (ITVLGLNAVFDILVIGKFNVL). Over 246–268 (EIVQKVLHKDKSLENLGMLRNGG) the chain is Cytoplasmic. The chain crosses the membrane as a helical span at residues 269 to 288 (LLFRMTLLTSGGAGMLYVRW). The Extracellular segment spans residues 289 to 354 (RIMGTGPPAF…PLIKSISDWR (66 aa)). The helical transmembrane segment at 355-375 (VIALAALWFCLIGLICQALCS) threads the bilayer. Residues 376 to 382 (EDGHKRR) lie on the Cytoplasmic side of the membrane. A helical transmembrane segment spans residues 383–403 (ILTLGLGFLVIPFLPASNLFF). The Extracellular segment spans residues 404 to 412 (RVGFVVAER). The chain crosses the membrane as a helical span at residues 413–433 (VLYLPSVGYCVLLTFGFGALS). The Cytoplasmic segment spans residues 434–440 (KHTKKKK). Residues 441–461 (LIAAVVLGILFINTLRCVLRS) traverse the membrane as a helical segment. The Extracellular portion of the chain corresponds to 462–741 (GEWRSEEQLF…KLELMQKKAV (280 aa)). 7 TPR repeats span residues 482-515 (AKVHYNIGKNLADKGNQTAAIRYYREAVRLNPKY), 516-549 (VHAMNNLGNILKERNELQEAEELLSLAVQIQPDF), 550-583 (AAAWMNLGIVQNSLKRFEAAEQSYRTAIKHRRKY), 584-617 (PDCYYNLGRLYADLNRHVDALNAWRNATVLKPEH), 618-651 (SLAWNNMIILLDNTGNLAQAEAVGREALELIPND), 652-685 (HSLMFSLANVLGKSQKYKESEALFLKAIKANPNA), and 686-719 (ASYHGNLAVLYHRWGHLDLAKKHYEISLQLDPTA). N497 is a glycosylation site (N-linked (GlcNAc...) asparagine). The N-linked (GlcNAc...) asparagine glycan is linked to N609.

The protein belongs to the TMTC family.

It is found in the membrane. Its subcellular location is the endoplasmic reticulum. The enzyme catalyses a di-trans,poly-cis-dolichyl beta-D-mannosyl phosphate + L-seryl-[protein] = 3-O-(alpha-D-mannosyl)-L-seryl-[protein] + a di-trans,poly-cis-dolichyl phosphate + H(+). It carries out the reaction a di-trans,poly-cis-dolichyl beta-D-mannosyl phosphate + L-threonyl-[protein] = 3-O-(alpha-D-mannosyl)-L-threonyl-[protein] + a di-trans,poly-cis-dolichyl phosphate + H(+). It participates in protein modification; protein glycosylation. Its function is as follows. Transfers mannosyl residues to the hydroxyl group of serine or threonine residues. The 4 members of the TMTC family are O-mannosyl-transferases dedicated primarily to the cadherin superfamily, each member seems to have a distinct role in decorating the cadherin domains with O-linked mannose glycans at specific regions. Also acts as O-mannosyl-transferase on other proteins such as PDIA3. The polypeptide is Protein O-mannosyl-transferase TMTC4 (Homo sapiens (Human)).